The primary structure comprises 355 residues: MPFLGQDWRSPGQSWVKTADGWKRFLDEKSGSFVSDLSSYCNKEVYSKENLFSSLNYDVAAKKRKKDIQNSKTKTQYFHQEKWIYVHKGSTKERHGYCTLGEAFNRLDFSTAILDSRRFNYVVRLLELIAKSQLTSLSGIAQKNFMNILEKVVLKVLEDQQNIRLIRELLQTLYTSLCTLVQRVGKSVLVGNINMWVYRMETILHWQQQLNSIQISRPAFKGLTITDLPVCLQLNIMQRLSDGRDLVSLGQAAPDLHVLSEDRLLWKRLCQYHFSERQIRKRLILSDKGQLDWKKMYFKLVRCYPRREQYGVTLQLCKHCHILSWKGTDHPCTANNPESCSVSLSPQDFINLFKF.

The Nuclear localization signal motif lies at 62–67 (KKRKKD). The short motif at 169–173 (LLQTL) is the Nuclear export signal element. One can recognise an F-box domain in the interval 223-271 (LTITDLPVCLQLNIMQRLSDGRDLVSLGQAAPDLHVLSEDRLLWKRLCQ). Positions 280–295 (RKRLILSDKGQLDWKK) match the Bipartite nuclear localization signal motif.

In terms of assembly, part of the SCF (SKP1-CUL1-F-box) E3 ubiquitin-protein ligase complex SCF(FBXO32) formed of CUL1, SKP1, RBX1 and FBXO32. Specifically expressed in cardiac and skeletal muscle.

It is found in the cytoplasm. The protein resides in the nucleus. Its pathway is protein modification; protein ubiquitination. Functionally, substrate recognition component of a SCF (SKP1-CUL1-F-box protein) E3 ubiquitin-protein ligase complex which mediates the ubiquitination and subsequent proteasomal degradation of target proteins. Probably recognizes and binds to phosphorylated target proteins during skeletal muscle atrophy. Recognizes TERF1. This Mus musculus (Mouse) protein is F-box only protein 32 (Fbxo32).